The sequence spans 121 residues: Small ribosomal subunit protein uS13 (121 aa).

A disordered region spans residues 91–121; sequence HRRGLPVRGQNSKNNARTRKGPRRTVANKKK. Residues 106-121 show a composition bias toward basic residues; sequence ARTRKGPRRTVANKKK.

The protein belongs to the universal ribosomal protein uS13 family. As to quaternary structure, part of the 30S ribosomal subunit. Forms a loose heterodimer with protein S19. Forms two bridges to the 50S subunit in the 70S ribosome.

Located at the top of the head of the 30S subunit, it contacts several helices of the 16S rRNA. In the 70S ribosome it contacts the 23S rRNA (bridge B1a) and protein L5 of the 50S subunit (bridge B1b), connecting the 2 subunits; these bridges are implicated in subunit movement. Contacts the tRNAs in the A and P-sites. The sequence is that of Small ribosomal subunit protein uS13 from Bacillus cereus (strain AH187).